The following is a 500-amino-acid chain: Ribose import ATP-binding protein RbsA (500 aa).

2 consecutive ABC transporter domains span residues 6 to 242 (LALS…VGRK) and 252 to 495 (AQQG…VGRN). 38–45 (GENGAGKS) contributes to the ATP binding site.

It belongs to the ABC transporter superfamily. Ribose importer (TC 3.A.1.2.1) family. As to quaternary structure, the complex is composed of an ATP-binding protein (RbsA), two transmembrane proteins (RbsC) and a solute-binding protein (RbsB).

It is found in the cell inner membrane. It carries out the reaction D-ribose(out) + ATP + H2O = D-ribose(in) + ADP + phosphate + H(+). In terms of biological role, part of the ABC transporter complex RbsABC involved in ribose import. Responsible for energy coupling to the transport system. In Vibrio cholerae serotype O1 (strain ATCC 39315 / El Tor Inaba N16961), this protein is Ribose import ATP-binding protein RbsA.